Reading from the N-terminus, the 138-residue chain is Probable prefoldin subunit 4 (138 aa).

Belongs to the prefoldin subunit beta family. Heterohexamer of two PFD-alpha type and four PFD-beta type subunits.

Functionally, binds specifically to cytosolic chaperonin (c-CPN) and transfers target proteins to it. Binds to nascent polypeptide chain and promotes folding in an environment in which there are many competing pathways for nonnative proteins. The sequence is that of Probable prefoldin subunit 4 from Drosophila melanogaster (Fruit fly).